Consider the following 349-residue polypeptide: Mitochondrial carrier protein SCaMC-3L (349 aa).

4 helical membrane passes run Gly-88–Ser-104, Gly-149–Phe-168, Leu-188–Met-205, and Tyr-243–Tyr-261. Solcar repeat units follow at residues Gly-88–Tyr-174 and Pro-182–Leu-267.

Belongs to the mitochondrial carrier (TC 2.A.29) family.

It localises to the mitochondrion inner membrane. It carries out the reaction Mg(2+)(out) + phosphate(in) + ATP(out) = Mg(2+)(in) + phosphate(out) + ATP(in). It catalyses the reaction ADP(out) + phosphate(in) + H(+)(out) = ADP(in) + phosphate(out) + H(+)(in). Functionally, calcium-independent ATP-Mg/Pi exchanger that catalyzes the electroneutral exchange of Mg-ATP or free ADP against an hydrogenphosphate and participates in the net transport of adenine nucleotides across the mitochondria inner membrane. This Bos taurus (Bovine) protein is Mitochondrial carrier protein SCaMC-3L.